Consider the following 347-residue polypeptide: Protein RecA (347 aa).

G67 to T74 lines the ATP pocket.

The protein belongs to the RecA family.

The protein resides in the cytoplasm. Can catalyze the hydrolysis of ATP in the presence of single-stranded DNA, the ATP-dependent uptake of single-stranded DNA by duplex DNA, and the ATP-dependent hybridization of homologous single-stranded DNAs. It interacts with LexA causing its activation and leading to its autocatalytic cleavage. The protein is Protein RecA of Helicobacter pylori (strain Shi470).